The sequence spans 647 residues: tRNA 5-methylaminomethyl-2-thiouridine biosynthesis bifunctional protein MnmC (647 aa).

Residues 1–227 (MLTWKNNLTP…KREMLIGSYS (227 aa)) are tRNA (mnm(5)s(2)U34)-methyltransferase. An FAD-dependent cmnm(5)s(2)U34 oxidoreductase region spans residues 256–647 (VGAGIAGTTL…ARFLYRKVRK (392 aa)).

The protein in the N-terminal section; belongs to the methyltransferase superfamily. tRNA (mnm(5)s(2)U34)-methyltransferase family. In the C-terminal section; belongs to the DAO family. Requires FAD as cofactor.

It localises to the cytoplasm. The catalysed reaction is 5-aminomethyl-2-thiouridine(34) in tRNA + S-adenosyl-L-methionine = 5-methylaminomethyl-2-thiouridine(34) in tRNA + S-adenosyl-L-homocysteine + H(+). Catalyzes the last two steps in the biosynthesis of 5-methylaminomethyl-2-thiouridine (mnm(5)s(2)U) at the wobble position (U34) in tRNA. Catalyzes the FAD-dependent demodification of cmnm(5)s(2)U34 to nm(5)s(2)U34, followed by the transfer of a methyl group from S-adenosyl-L-methionine to nm(5)s(2)U34, to form mnm(5)s(2)U34. The polypeptide is tRNA 5-methylaminomethyl-2-thiouridine biosynthesis bifunctional protein MnmC (Leptospira interrogans serogroup Icterohaemorrhagiae serovar copenhageni (strain Fiocruz L1-130)).